The primary structure comprises 818 residues: IQ and AAA domain-containing protein 1-like (818 aa).

Residues 206-235 form the IQ domain; that stretch reads QGQAAVTIQKVWKGYLQRKRTQQDRRMEME. 2 disordered regions span residues 344–377 and 458–482; these read QMQE…AKKG and EERP…KDLT. Residues 463–476 are compositionally biased toward basic residues; sequence RAPKKTPGKKTGKK. 567 to 574 provides a ligand contact to ATP; sequence GPSGMGKK. The tract at residues 795 to 818 is disordered; the sequence is SMKHRMDQLEAEEAKLDKEKKKRK. Over residues 798–818 the composition is skewed to basic and acidic residues; it reads HRMDQLEAEEAKLDKEKKKRK.

The protein belongs to the AAA ATPase family.

The polypeptide is IQ and AAA domain-containing protein 1-like (IQCA1L) (Homo sapiens (Human)).